The primary structure comprises 486 residues: NADH-quinone oxidoreductase subunit N (486 aa).

The next 14 membrane-spanning stretches (helical) occupy residues F8 to V28, A38 to V58, A73 to A93, L105 to L125, L128 to F148, F169 to L189, H196 to F216, P235 to L255, L269 to A289, I304 to A324, V325 to L345, A373 to G393, H405 to V427, and I454 to L474.

Belongs to the complex I subunit 2 family. As to quaternary structure, NDH-1 is composed of 13 different subunits. Subunits NuoA, H, J, K, L, M, N constitute the membrane sector of the complex.

It is found in the cell inner membrane. The catalysed reaction is a quinone + NADH + 5 H(+)(in) = a quinol + NAD(+) + 4 H(+)(out). NDH-1 shuttles electrons from NADH, via FMN and iron-sulfur (Fe-S) centers, to quinones in the respiratory chain. The immediate electron acceptor for the enzyme in this species is believed to be ubiquinone. Couples the redox reaction to proton translocation (for every two electrons transferred, four hydrogen ions are translocated across the cytoplasmic membrane), and thus conserves the redox energy in a proton gradient. The chain is NADH-quinone oxidoreductase subunit N from Pseudomonas aeruginosa (strain ATCC 15692 / DSM 22644 / CIP 104116 / JCM 14847 / LMG 12228 / 1C / PRS 101 / PAO1).